Consider the following 108-residue polypeptide: PTS system cellobiose-specific EIIB component (108 aa).

The PTS EIIB type-3 domain maps to 3-108 (DKVIALACAA…VLAAAENLMN (106 aa)). Catalysis depends on Cys-10, which acts as the Phosphocysteine intermediate. Cys-10 is modified (phosphocysteine; by EIIA).

It catalyses the reaction D-cellobiose(out) + N(pros)-phospho-L-histidyl-[protein] = 6-phospho-beta-D-glucosyl-(1-&gt;4)-D-glucose(in) + L-histidyl-[protein]. In terms of biological role, the phosphoenolpyruvate-dependent sugar phosphotransferase system (sugar PTS), a major carbohydrate active transport system, catalyzes the phosphorylation of incoming sugar substrates concomitantly with their translocation across the cell membrane. Involved in cellobiose transport with PtcA and CelB. This system can also transport lactose. This Lactococcus lactis subsp. lactis (strain IL1403) (Streptococcus lactis) protein is PTS system cellobiose-specific EIIB component.